The following is a 241-amino-acid chain: Uridylate kinase (241 aa).

ATP is bound by residues 10-13 (KLSG), G53, and R57. UMP-binding positions include D72 and 133-140 (AGSPYFST). Residues N161, Y167, and D170 each coordinate ATP.

This sequence belongs to the UMP kinase family. In terms of assembly, homohexamer.

It localises to the cytoplasm. The enzyme catalyses UMP + ATP = UDP + ADP. It functions in the pathway pyrimidine metabolism; CTP biosynthesis via de novo pathway; UDP from UMP (UMPK route): step 1/1. Inhibited by UTP. Catalyzes the reversible phosphorylation of UMP to UDP. This chain is Uridylate kinase, found in Aster yellows witches'-broom phytoplasma (strain AYWB).